The primary structure comprises 398 residues: MSEGNAAGEPSTPGGPRPLLTGARGLIGRRPAPPLTPGRLPSIRSRDLTLGGVKKKTFTPNIISRKIKEEPKEEVTVKKEKRERDRDRQREGHGRGRGRPEVIQSHSIFEQGPAEMMKKKGNWDKTVDVSDMGPSHIINIKKEKRETDEETKQILRMLEKDDFLDDPGLRNDTRNMPVQLPLAHSGWLFKEENDEPDVKPWLAGPKEEDMEVDIPAVKVKEEPRDEEEEAKMKAPPKAARKTPGLPKDVSVAELLRELSLTKEEELLFLQLPDTLPGQPPTQDIKPIKTEVQGEDGQVVLIKQEKDREAKLAENACTLADLTEGQVGKLLIRKSGRVQLLLGKVTLDVTMGTACSFLQELVSVGLGDSRTGEMTVLGHVKHKLVCSPDFESLLDHKHR.

A disordered region spans residues 1-114 (MSEGNAAGEP…SHSIFEQGPA (114 aa)). The residue at position 2 (S2) is an N-acetylserine. S42 carries the post-translational modification Phosphoserine. A compositionally biased stretch (basic and acidic residues) spans 66-100 (KIKEEPKEEVTVKKEKRERDRDRQREGHGRGRGRP). Residues K68 and K78 each participate in a glycyl lysine isopeptide (Lys-Gly) (interchain with G-Cter in SUMO2) cross-link. An omega-N-methylarginine mark is found at R95, R97, and R99. Glycyl lysine isopeptide (Lys-Gly) (interchain with G-Cter in SUMO2) cross-links involve residues K141, K152, K160, K190, K199, K206, K220, K285, K302, K310, and K396. The disordered stretch occupies residues 220–244 (KEEPRDEEEEAKMKAPPKAARKTPG).

Belongs to the eukaryotic RPC4/POLR3D RNA polymerase subunit family. Component of the RNA polymerase III complex consisting of 17 subunits: a ten-subunit horseshoe-shaped catalytic core composed of POLR3A/RPC1, POLR3B/RPC2, POLR1C/RPAC1, POLR1D/RPAC2, POLR3K/RPC10, POLR2E/RPABC1, POLR2F/RPABC2, POLR2H/RPABC3, POLR2K/RPABC4 and POLR2L/RPABC5; a mobile stalk composed of two subunits POLR3H/RPC8 and CRCP/RPC9, protruding from the core and functioning primarily in transcription initiation; and additional subunits homologous to general transcription factors of the RNA polymerase II machinery, POLR3C/RPC3-POLR3F/RPC6-POLR3G/RPC7 heterotrimer required for transcription initiation and POLR3D/RPC4-POLR3E/RPC5 heterodimer involved in both transcription initiation and termination. In terms of processing, sumoylation on Lys-141 can serve as a signal to mark misfolded Pol III for proteasomal degradation.

It is found in the nucleus. DNA-dependent RNA polymerase catalyzes the transcription of DNA into RNA using the four ribonucleoside triphosphates as substrates. Specific peripheric component of RNA polymerase III (Pol III) which synthesizes small non-coding RNAs including 5S rRNA, snRNAs, tRNAs and miRNAs from at least 500 distinct genomic loci. Assembles with POLR3E/RPC5 forming a subcomplex that binds the Pol III core. Enables recruitment of Pol III at transcription initiation site and drives transcription initiation from both type 2 and type 3 DNA promoters. Required for efficient transcription termination and reinitiation. Pol III plays a key role in sensing and limiting infection by intracellular bacteria and DNA viruses. Acts as nuclear and cytosolic DNA sensor involved in innate immune response. Can sense non-self dsDNA that serves as template for transcription into dsRNA. The non-self RNA polymerase III transcripts, such as Epstein-Barr virus-encoded RNAs (EBERs) induce type I interferon and NF-kappa-B through the RIG-I pathway. The sequence is that of DNA-directed RNA polymerase III subunit RPC4 from Homo sapiens (Human).